The primary structure comprises 501 residues: Lysine--tRNA ligase (501 aa).

Glutamate 411 and glutamate 418 together coordinate Mg(2+).

This sequence belongs to the class-II aminoacyl-tRNA synthetase family. In terms of assembly, homodimer. Requires Mg(2+) as cofactor.

The protein localises to the cytoplasm. The catalysed reaction is tRNA(Lys) + L-lysine + ATP = L-lysyl-tRNA(Lys) + AMP + diphosphate. The polypeptide is Lysine--tRNA ligase (Pseudomonas aeruginosa (strain LESB58)).